The chain runs to 530 residues: Chaperonin GroEL 2 (530 aa).

ATP-binding positions include 30–33 (TLGP), K51, 87–91 (DGTTT), G415, 479–481 (NAA), and D495.

It belongs to the chaperonin (HSP60) family. Forms a cylinder of 14 subunits composed of two heptameric rings stacked back-to-back. Interacts with the co-chaperonin GroES.

It localises to the cytoplasm. The enzyme catalyses ATP + H2O + a folded polypeptide = ADP + phosphate + an unfolded polypeptide.. Functionally, together with its co-chaperonin GroES, plays an essential role in assisting protein folding. The GroEL-GroES system forms a nano-cage that allows encapsulation of the non-native substrate proteins and provides a physical environment optimized to promote and accelerate protein folding. This Vibrio cholerae serotype O1 (strain ATCC 39315 / El Tor Inaba N16961) protein is Chaperonin GroEL 2.